Reading from the N-terminus, the 276-residue chain is NADPH-dependent 7-cyano-7-deazaguanine reductase (276 aa).

Residue 83–85 (IES) coordinates substrate. NADPH is bound at residue 85-86 (SK). Cys-184 (thioimide intermediate) is an active-site residue. Catalysis depends on Asp-191, which acts as the Proton donor. 223–224 (HE) lines the substrate pocket. 252-253 (RG) contacts NADPH.

It belongs to the GTP cyclohydrolase I family. QueF type 2 subfamily. Homodimer.

It is found in the cytoplasm. The catalysed reaction is 7-aminomethyl-7-carbaguanine + 2 NADP(+) = 7-cyano-7-deazaguanine + 2 NADPH + 3 H(+). It functions in the pathway tRNA modification; tRNA-queuosine biosynthesis. Its function is as follows. Catalyzes the NADPH-dependent reduction of 7-cyano-7-deazaguanine (preQ0) to 7-aminomethyl-7-deazaguanine (preQ1). This chain is NADPH-dependent 7-cyano-7-deazaguanine reductase, found in Pseudomonas putida (strain ATCC 700007 / DSM 6899 / JCM 31910 / BCRC 17059 / LMG 24140 / F1).